Here is a 433-residue protein sequence, read N- to C-terminus: Serine hydroxymethyltransferase (433 aa).

Residue 121–123 participates in (6S)-5,6,7,8-tetrahydrofolate binding; sequence AHV. Lysine 227 carries the post-translational modification N6-(pyridoxal phosphate)lysine. (6S)-5,6,7,8-tetrahydrofolate is bound at residue glutamate 243.

The protein belongs to the SHMT family. Homodimer. Pyridoxal 5'-phosphate serves as cofactor.

It localises to the cytoplasm. It participates in amino-acid biosynthesis; glycine biosynthesis; glycine from L-serine: step 1/1. Catalyzes the reversible interconversion of serine and glycine with a modified folate serving as the one-carbon carrier. Also exhibits a pteridine-independent aldolase activity toward beta-hydroxyamino acids, producing glycine and aldehydes, via a retro-aldol mechanism. The protein is Serine hydroxymethyltransferase of Saccharolobus islandicus (strain M.14.25 / Kamchatka #1) (Sulfolobus islandicus).